Consider the following 478-residue polypeptide: uncharacterized protein (478 aa).

Residues 5 to 85 form the RRM domain; that stretch reads KRIYVGGLSS…SKLRIEEARP (81 aa). Phosphoserine is present on residues Ser207 and Ser308.

It localises to the nucleus. The protein resides in the nucleolus. This is an uncharacterized protein from Schizosaccharomyces pombe (strain 972 / ATCC 24843) (Fission yeast).